Here is a 624-residue protein sequence, read N- to C-terminus: tRNA uridine 5-carboxymethylaminomethyl modification enzyme MnmG (624 aa).

FAD contacts are provided by residues 16–21 (GAGHAG), valine 128, and serine 183. 275–289 (GPRYCPSIEDKVVRF) contacts NAD(+). Glutamine 372 serves as a coordination point for FAD.

It belongs to the MnmG family. In terms of assembly, homodimer. Heterotetramer of two MnmE and two MnmG subunits. The cofactor is FAD.

Its subcellular location is the cytoplasm. NAD-binding protein involved in the addition of a carboxymethylaminomethyl (cmnm) group at the wobble position (U34) of certain tRNAs, forming tRNA-cmnm(5)s(2)U34. The chain is tRNA uridine 5-carboxymethylaminomethyl modification enzyme MnmG from Geobacter metallireducens (strain ATCC 53774 / DSM 7210 / GS-15).